A 368-amino-acid chain; its full sequence is ATP-dependent (S)-NAD(P)H-hydrate dehydratase (368 aa).

In terms of domain architecture, YjeF C-terminal spans 13 to 357; it reads LFKKVRKIVP…DEVHESFLEL (345 aa). Residues glycine 125 and 178-184 contribute to the (6S)-NADPHX site; that span reads NVNEFSR. ATP contacts are provided by residues 231-235 and 250-259; these read KGPHD and GGLKRSGGQG. (6S)-NADPHX is bound at residue aspartate 260.

The protein belongs to the NnrD/CARKD family. Mg(2+) serves as cofactor.

It localises to the cytoplasm. It catalyses the reaction (6S)-NADHX + ATP = ADP + phosphate + NADH + H(+). The enzyme catalyses (6S)-NADPHX + ATP = ADP + phosphate + NADPH + H(+). Functionally, catalyzes the dehydration of the S-form of NAD(P)HX at the expense of ATP, which is converted to ADP. Together with NAD(P)HX epimerase, which catalyzes the epimerization of the S- and R-forms, the enzyme allows the repair of both epimers of NAD(P)HX, a damaged form of NAD(P)H that is a result of enzymatic or heat-dependent hydration. In Aspergillus fumigatus (strain ATCC MYA-4609 / CBS 101355 / FGSC A1100 / Af293) (Neosartorya fumigata), this protein is ATP-dependent (S)-NAD(P)H-hydrate dehydratase.